The sequence spans 516 residues: Ribose import ATP-binding protein RbsA (516 aa).

2 consecutive ABC transporter domains span residues Leu-14–Ala-250 and Ala-261–Gly-504. Residue Gly-46 to Ser-53 coordinates ATP.

The protein belongs to the ABC transporter superfamily. Ribose importer (TC 3.A.1.2.1) family. The complex is composed of an ATP-binding protein (RbsA), two transmembrane proteins (RbsC) and a solute-binding protein (RbsB).

Its subcellular location is the cell inner membrane. It carries out the reaction D-ribose(out) + ATP + H2O = D-ribose(in) + ADP + phosphate + H(+). Its function is as follows. Part of the ABC transporter complex RbsABC involved in ribose import. Responsible for energy coupling to the transport system. In Jannaschia sp. (strain CCS1), this protein is Ribose import ATP-binding protein RbsA.